The sequence spans 407 residues: PWWP domain-containing protein 3 (407 aa).

The disordered stretch occupies residues 1 to 46 (MMVARTRSQKRKLEEINNQKKIKTKKKATGQQTSNTKNLRDVKKKG). The 67-residue stretch at 63–129 (NGEYVLAKMS…SSNVLPLTVD (67 aa)) folds into the PWWP domain. Serine 160 and serine 162 each carry phosphoserine. The interval 163 to 248 (DVEEDEFEPE…PIPSPKKTAK (86 aa)) is disordered. Over residues 172 to 208 (ENTRKKLQKPIEKPKKEKIEATPKIDGGKRLKNEKSS) the composition is skewed to basic and acidic residues. A phosphoserine mark is found at serine 236, serine 238, and serine 242.

Component of the mst2 complex composed of at least eaf6, mst2, nto1, pdp3, ptf1, ptf2 and tfg3.

Its subcellular location is the nucleus. Functionally, component of the mst2 complex which is a highly specific H3 lysine 14 (H3K14) acetyltransferase that functions together with gcn5 to regulate global levels of H3K14 acetylation (H3K14ac), critical for DNA damage checkpoint activation. In Schizosaccharomyces pombe (strain 972 / ATCC 24843) (Fission yeast), this protein is PWWP domain-containing protein 3 (pdp3).